We begin with the raw amino-acid sequence, 258 residues long: uncharacterized protein (258 aa).

The chain crosses the membrane as a helical span at residues 163 to 187 (GIVGAAGLMLMFADLNGIPGICLMG).

The protein localises to the membrane. This is an uncharacterized protein from Methanocaldococcus jannaschii (strain ATCC 43067 / DSM 2661 / JAL-1 / JCM 10045 / NBRC 100440) (Methanococcus jannaschii).